Here is a 420-residue protein sequence, read N- to C-terminus: MKVGGFQPVRGTKDLLSEEYYKLFHIQNVAQEIGERFGFMPVQTPIFEFQEVFCKTLGDSTDVIGKEMYTFADRGGDVLALRPEFTAAIVRLLLSEKMQPPARLFTAGPVFRYERPQKCRQRQFHQINYECFGAGGSQADAEIISLAYCVLEVFGLHCDVTLEINSLGSSECMNAYRASLLSFFEKYRSELSEDSRRRLQTNPLRILDSKDATDKEILSTAPSIEDFYDAETRASFEGLKDHLTNLGIPYAVNRRLVRGLDYYTGTVFEYKTSSLGAQDAIIAGGRYDNLVAAMGGENVPAIGFAGGVERLAALMSYSRTRKFCVFILPISEEVVSHAMRITYEIRRTLSGVQVICDIVTRLKTGIKRADRQKADIALILGDEEVNRNAVSCKNMLTGKQEEISISNITEYLKAMMAERQ.

Belongs to the class-II aminoacyl-tRNA synthetase family. In terms of assembly, homodimer.

It localises to the cytoplasm. The enzyme catalyses tRNA(His) + L-histidine + ATP = L-histidyl-tRNA(His) + AMP + diphosphate + H(+). This Anaplasma phagocytophilum (strain HZ) protein is Histidine--tRNA ligase.